Reading from the N-terminus, the 159-residue chain is Transcriptional repressor NrdR (159 aa).

A zinc finger lies at Cys3–Cys34. Positions Leu49–Asp139 constitute an ATP-cone domain.

The protein belongs to the NrdR family. Requires Zn(2+) as cofactor.

Its function is as follows. Negatively regulates transcription of bacterial ribonucleotide reductase nrd genes and operons by binding to NrdR-boxes. The protein is Transcriptional repressor NrdR of Mesorhizobium japonicum (strain LMG 29417 / CECT 9101 / MAFF 303099) (Mesorhizobium loti (strain MAFF 303099)).